The primary structure comprises 104 residues: MLNRVFLEGEIESSCWSVKKTGFLVTIKQMRFFGERLFTDYYVIYANGQLAYELEKHTKKYKTISIEGILRTYLERKSEIWKTTIEIVKIFNPKNEIVIDYKEI.

This is an uncharacterized protein from Mycoplasma pneumoniae (strain ATCC 29342 / M129 / Subtype 1) (Mycoplasmoides pneumoniae).